Consider the following 388-residue polypeptide: Chitinase 4 (388 aa).

The region spanning F22–V375 is the GH18 domain. 2 N-linked (GlcNAc...) asparagine glycosylation sites follow: N30 and N82. Chitin-binding positions include N82–Q83 and G109–G112. 2 N-linked (GlcNAc...) asparagine glycosylation sites follow: N123 and N132. E151 serves as the catalytic Proton donor. Position 152 (Y152) interacts with chitin. N155 carries N-linked (GlcNAc...) asparagine glycosylation. M208–D211 lines the chitin pocket. Residue N237 is glycosylated (N-linked (GlcNAc...) asparagine). Residue W350 coordinates chitin.

This sequence belongs to the glycosyl hydrolase 18 family. Chitinase class V subfamily.

It localises to the secreted. The catalysed reaction is Random endo-hydrolysis of N-acetyl-beta-D-glucosaminide (1-&gt;4)-beta-linkages in chitin and chitodextrins.. Chitinase involved in the remodeling of chitin in the fungal cell wall. Plays a role in sporulation. The polypeptide is Chitinase 4 (CHT4) (Candida albicans (strain SC5314 / ATCC MYA-2876) (Yeast)).